The sequence spans 296 residues: NAD kinase (296 aa).

The active-site Proton acceptor is Asp72. NAD(+)-binding positions include Asp72–Gly73, Asn146–Asp147, Arg157, Lys174, Asp176, Thr187–Ser192, and Gln247.

It belongs to the NAD kinase family. Requires a divalent metal cation as cofactor.

The protein resides in the cytoplasm. The catalysed reaction is NAD(+) + ATP = ADP + NADP(+) + H(+). In terms of biological role, involved in the regulation of the intracellular balance of NAD and NADP, and is a key enzyme in the biosynthesis of NADP. Catalyzes specifically the phosphorylation on 2'-hydroxyl of the adenosine moiety of NAD to yield NADP. The chain is NAD kinase from Pseudomonas putida (strain GB-1).